We begin with the raw amino-acid sequence, 226 residues long: Ribonuclease 3 (226 aa).

The RNase III domain occupies 6-128; that stretch reads INRLQRKLGY…LIGGVFLDSN (123 aa). Glutamate 41 serves as a coordination point for Mg(2+). The active site involves aspartate 45. 2 residues coordinate Mg(2+): aspartate 114 and glutamate 117. The active site involves glutamate 117. The DRBM domain maps to 155-225; it reads DPKTRLQEYL…AEQALKKLEL (71 aa).

This sequence belongs to the ribonuclease III family. As to quaternary structure, homodimer. Mg(2+) is required as a cofactor.

The protein localises to the cytoplasm. It carries out the reaction Endonucleolytic cleavage to 5'-phosphomonoester.. Functionally, digests double-stranded RNA. Involved in the processing of primary rRNA transcript to yield the immediate precursors to the large and small rRNAs (23S and 16S). Processes some mRNAs, and tRNAs when they are encoded in the rRNA operon. Processes pre-crRNA and tracrRNA of type II CRISPR loci if present in the organism. This chain is Ribonuclease 3, found in Salmonella typhi.